We begin with the raw amino-acid sequence, 526 residues long: Putative NipSnap protein K02D10.1 (526 aa).

The protein belongs to the NipSnap family.

The polypeptide is Putative NipSnap protein K02D10.1 (Caenorhabditis elegans).